We begin with the raw amino-acid sequence, 181 residues long: Adenine phosphoribosyltransferase (181 aa).

The protein belongs to the purine/pyrimidine phosphoribosyltransferase family. As to quaternary structure, homodimer.

The protein resides in the cytoplasm. It catalyses the reaction AMP + diphosphate = 5-phospho-alpha-D-ribose 1-diphosphate + adenine. It participates in purine metabolism; AMP biosynthesis via salvage pathway; AMP from adenine: step 1/1. Functionally, catalyzes a salvage reaction resulting in the formation of AMP, that is energically less costly than de novo synthesis. In Pseudoalteromonas translucida (strain TAC 125), this protein is Adenine phosphoribosyltransferase.